A 474-amino-acid chain; its full sequence is Tumor necrosis factor receptor superfamily member 1B (474 aa).

An N-terminal signal peptide occupies residues 1 to 22; it reads MAPAALWVALVFELQLWATGHT. The Extracellular segment spans residues 23–258; sequence VPAQVVLTPY…PIIEQSTKGG (236 aa). Residue T30 is glycosylated (O-linked (GalNAc...) threonine). TNFR-Cys repeat units follow at residues 39 to 77, 78 to 119, 120 to 164, and 165 to 203; these read ECQI…TVCA, DCEA…NRVC, ACEA…VLCK, and ACAP…AVCA. Intrachain disulfides connect C40–C54, C55–C68, C58–C76, C79–C94, C97–C111, C101–C119, C121–C127, C136–C145, C139–C163, and C166–C181. N-linked (GlcNAc...) asparagine glycosylation is present at N69. A glycan (N-linked (GlcNAc...) asparagine) is linked at N195. 2 O-linked (GalNAc...) threonine glycosylation sites follow: T208 and T224. Residues 220-243 form a disordered region; it reads QPEPTRSQPLDQEPGPSQTPSILT. A helical transmembrane segment spans residues 259 to 288; the sequence is ISLPIGLIVGVTSLGLLMLGLVNCIILVQR. The Cytoplasmic portion of the chain corresponds to 289-474; the sequence is KKKPSCLQRD…WFDQIAVKVA (186 aa). 3 disordered regions span residues 295-314, 321-378, and 397-463; these read LQRD…DAVG, LTTA…GSHG, and SQCS…PSQA. Over residues 297-310 the composition is skewed to basic and acidic residues; that stretch reads RDAKVPHVPDEKSQ. Low complexity-rich tracts occupy residues 324 to 338 and 363 to 378; these read APSS…SASA and ARAS…GSHG. S331 carries the phosphoserine modification. Polar residues predominate over residues 429–442; that stretch reads ECPSQSPCETTETL.

Binds to TRAF2. Interacts with BMX. Interacts (activated form) with XPNPEP3.

It is found in the membrane. In terms of biological role, receptor with high affinity for TNFSF2/TNF-alpha and approximately 5-fold lower affinity for homotrimeric TNFSF1/lymphotoxin-alpha. The TRAF1/TRAF2 complex recruits the apoptotic suppressors BIRC2 and BIRC3 to TNFRSF1B/TNFR2. The chain is Tumor necrosis factor receptor superfamily member 1B (Tnfrsf1b) from Mus musculus (Mouse).